A 165-amino-acid chain; its full sequence is Putative protein FAM86C2P (165 aa).

Belongs to the class I-like SAM-binding methyltransferase superfamily. EEF2KMT family.

In Homo sapiens (Human), this protein is Putative protein FAM86C2P (FAM86C2P).